The primary structure comprises 449 residues: Doublesex- and mab-3-related transcription factor A2 (449 aa).

A DNA-binding region (DM) is located at residues 57–104 (CARCRNHGVVSALKGHKRYCRWKDCMCAKCTLIAERQRVMAAQVALRR). The tract at residues 166–259 (KNQLSGSATP…PSPSSAASRH (94 aa)) is disordered. The segment covering 167 to 177 (NQLSGSATPQP) has biased composition (polar residues). Residues 230–240 (GSVSSIGSDSG) show a composition bias toward low complexity. The 36-residue stretch at 260 to 295 (MNAIDILTRVFPSHKRSVLELVLQGCGKDVVQAIEQ) folds into the DMA domain.

Belongs to the DMRT family.

It localises to the nucleus. Its function is as follows. May be involved in sexual development. The protein is Doublesex- and mab-3-related transcription factor A2 (dmrta2) of Oreochromis niloticus (Nile tilapia).